The following is a 351-amino-acid chain: Porphobilinogen deaminase (351 aa).

Position 242 is an S-(dipyrrolylmethanemethyl)cysteine (C242).

It belongs to the HMBS family. Monomer. Dipyrromethane serves as cofactor.

It catalyses the reaction 4 porphobilinogen + H2O = hydroxymethylbilane + 4 NH4(+). The protein operates within porphyrin-containing compound metabolism; protoporphyrin-IX biosynthesis; coproporphyrinogen-III from 5-aminolevulinate: step 2/4. Functionally, tetrapolymerization of the monopyrrole PBG into the hydroxymethylbilane pre-uroporphyrinogen in several discrete steps. The sequence is that of Porphobilinogen deaminase from Rickettsia rickettsii (strain Sheila Smith).